The sequence spans 329 residues: 4-hydroxythreonine-4-phosphate dehydrogenase (329 aa).

Substrate contacts are provided by histidine 136 and threonine 137. Positions 166, 211, and 266 each coordinate a divalent metal cation. Positions 274, 283, and 292 each coordinate substrate.

The protein belongs to the PdxA family. In terms of assembly, homodimer. The cofactor is Zn(2+). Mg(2+) serves as cofactor. It depends on Co(2+) as a cofactor.

It is found in the cytoplasm. It carries out the reaction 4-(phosphooxy)-L-threonine + NAD(+) = 3-amino-2-oxopropyl phosphate + CO2 + NADH. Its pathway is cofactor biosynthesis; pyridoxine 5'-phosphate biosynthesis; pyridoxine 5'-phosphate from D-erythrose 4-phosphate: step 4/5. In terms of biological role, catalyzes the NAD(P)-dependent oxidation of 4-(phosphooxy)-L-threonine (HTP) into 2-amino-3-oxo-4-(phosphooxy)butyric acid which spontaneously decarboxylates to form 3-amino-2-oxopropyl phosphate (AHAP). The sequence is that of 4-hydroxythreonine-4-phosphate dehydrogenase from Salmonella arizonae (strain ATCC BAA-731 / CDC346-86 / RSK2980).